The chain runs to 451 residues: Gamma-aminobutyric acid receptor subunit alpha-2 (451 aa).

Positions 1–28 (MKTKLNIYNMQLLLFVFLVWDPARLVLA) are cleaved as a signal peptide. Over 29 to 249 (NIQEDEAKNN…MTAHFHLKRK (221 aa)) the chain is Extracellular. An N-linked (GlcNAc...) asparagine glycan is attached at Asn-38. 4-aminobutanoate is bound at residue Arg-94. A glycan (N-linked (GlcNAc...) asparagine) is linked at Asn-138. Thr-157 contributes to the 4-aminobutanoate binding site. Cys-166 and Cys-180 are disulfide-bonded. The chain crosses the membrane as a helical span at residues 250 to 270 (IGYFVIQTYLPCIMTVILSQV). Residues 271–280 (SFWLNRESVP) are Cytoplasmic-facing. The chain crosses the membrane as a helical span at residues 281–300 (ARTVFGVTTVLTMTTLSISA). The Extracellular portion of the chain corresponds to 301–311 (RNSLPKVAYAT). Residues 312–332 (AMDWFIAVCYAFVFSALIEFA) form a helical membrane-spanning segment. Topologically, residues 333–420 (TVNYFTKRGW…FNSVSKIDRM (88 aa)) are cytoplasmic. A helical transmembrane segment spans residues 421–441 (SRIVFPVLFGTFNLVYWATYL). The Extracellular segment spans residues 442–451 (NREPVLGVSP).

This sequence belongs to the ligand-gated ion channel (TC 1.A.9) family. Gamma-aminobutyric acid receptor (TC 1.A.9.5) subfamily. GABRA2 sub-subfamily. In terms of assembly, heteropentamer, formed by a combination of alpha (GABRA1-6), beta (GABRB1-3), gamma (GABRG1-3), delta (GABRD), epsilon (GABRE), rho (GABRR1-3), pi (GABRP) and theta (GABRQ) subunits, each subunit exhibiting distinct physiological and pharmacological properties. Interacts with UBQLN1. Interacts with KIF21B. Interacts with LHFPL4. Interacts with SHISA7; interaction leads to the regulation of GABA(A) receptor trafficking, channel deactivation kinetics and pharmacology. Glycosylated.

Its subcellular location is the postsynaptic cell membrane. It is found in the cell membrane. The protein resides in the cytoplasmic vesicle membrane. It localises to the cell projection. The protein localises to the dendrite. It carries out the reaction chloride(in) = chloride(out). With respect to regulation, activated by pentobarbital. Inhibited by the antagonist bicuculline. In terms of biological role, alpha subunit of the heteropentameric ligand-gated chloride channel gated by gamma-aminobutyric acid (GABA), a major inhibitory neurotransmitter in the brain. GABA-gated chloride channels, also named GABA(A) receptors (GABAAR), consist of five subunits arranged around a central pore and contain GABA active binding site(s) located at the alpha and beta subunit interface(s). When activated by GABA, GABAARs selectively allow the flow of chloride anions across the cell membrane down their electrochemical gradient. Chloride influx into the postsynaptic neuron following GABAAR opening decreases the neuron ability to generate a new action potential, thereby reducing nerve transmission. The alpha-2 subunit exhibits synaptogenic activity together with beta-2 and very little to no activity together with beta-3, the gamma-2 subunit being necessary but not sufficient to induce rapid synaptic contacts formation. In Pongo abelii (Sumatran orangutan), this protein is Gamma-aminobutyric acid receptor subunit alpha-2 (GABRA2).